A 90-amino-acid chain; its full sequence is Neurotoxin LmNaTx19 (90 aa).

Residues 1-19 (MNHLILIVAMCLMVIGVQC) form the signal peptide. Residues 21-80 (KDGYLYDDVDCKFSCWDNEYCRKLCKSKKAVGGYCWRWRFSCYCTGLPDNEKTEGTYKCG) form the LCN-type CS-alpha/beta domain. Disulfide bonds link cysteine 31-cysteine 79, cysteine 35-cysteine 55, cysteine 41-cysteine 62, and cysteine 45-cysteine 64.

Belongs to the long (4 C-C) scorpion toxin superfamily. Sodium channel inhibitor family. Alpha subfamily. Expressed by the venom gland.

The protein resides in the secreted. Its function is as follows. Binds voltage-independently at site-3 of voltage-gated sodium channels (Nav) and inhibits the inactivation of the activated channels, thereby blocking neuronal transmission. In Lychas mucronatus (Chinese swimming scorpion), this protein is Neurotoxin LmNaTx19.